We begin with the raw amino-acid sequence, 312 residues long: Aspartate carbamoyltransferase catalytic subunit (312 aa).

2 residues coordinate carbamoyl phosphate: arginine 55 and threonine 56. Lysine 83 serves as a coordination point for L-aspartate. The carbamoyl phosphate site is built by arginine 105, histidine 138, and glutamine 141. Residues arginine 171 and arginine 225 each contribute to the L-aspartate site. Carbamoyl phosphate contacts are provided by glycine 266 and proline 267.

Belongs to the aspartate/ornithine carbamoyltransferase superfamily. ATCase family. In terms of assembly, heterododecamer (2C3:3R2) of six catalytic PyrB chains organized as two trimers (C3), and six regulatory PyrI chains organized as three dimers (R2).

It catalyses the reaction carbamoyl phosphate + L-aspartate = N-carbamoyl-L-aspartate + phosphate + H(+). Its pathway is pyrimidine metabolism; UMP biosynthesis via de novo pathway; (S)-dihydroorotate from bicarbonate: step 2/3. In terms of biological role, catalyzes the condensation of carbamoyl phosphate and aspartate to form carbamoyl aspartate and inorganic phosphate, the committed step in the de novo pyrimidine nucleotide biosynthesis pathway. The sequence is that of Aspartate carbamoyltransferase catalytic subunit from Corynebacterium glutamicum (strain ATCC 13032 / DSM 20300 / JCM 1318 / BCRC 11384 / CCUG 27702 / LMG 3730 / NBRC 12168 / NCIMB 10025 / NRRL B-2784 / 534).